The chain runs to 380 residues: MAPNLRKSHPLLKMVNNSLIDLPTPPNISAWWNFGSLLGICLITQILTGLLLAMHYTADTTLAFSSVAHTCRNVQYGWLIRNLHANGASLFFICVYLHIGRGLYYGSYLYKETWNTGIILLLTLMATAFVGYVLPWGQMSFWGATVITNLFSAIPYIGQTLVEWAWGGFSVDNPTLTRFFALHFLLPFLIAGLTLIHLTFLHESGSNNPLGIVSNCDKIPFHPYFSLKDLLGAALMLSPLAILALFTPNFLGDPENFTPANPLVTPPHIKPEWYFLFAYAILRSIPNKLGGVLALAASVLILFLSPFLHKSKQRTMTFRPLSQLLFWFLVANLLILTWVGSQPVEHPFIIIGQLASFTYFTTLLVLLPLTGALENKILNY.

Transmembrane regions (helical) follow at residues 34–54 (FGSL…LLAM), 78–99 (WLIR…YLHI), 114–134 (WNTG…GYVL), and 179–199 (FFAL…IHLT). 2 residues coordinate heme b: histidine 84 and histidine 98. Heme b contacts are provided by histidine 183 and histidine 197. An a ubiquinone-binding site is contributed by histidine 202. 4 helical membrane passes run 227–247 (LKDL…ALFT), 289–309 (LGGV…PFLH), 321–341 (LSQL…WVGS), and 348–368 (FIII…VLLP).

It belongs to the cytochrome b family. The cytochrome bc1 complex contains 11 subunits: 3 respiratory subunits (MT-CYB, CYC1 and UQCRFS1), 2 core proteins (UQCRC1 and UQCRC2) and 6 low-molecular weight proteins (UQCRH/QCR6, UQCRB/QCR7, UQCRQ/QCR8, UQCR10/QCR9, UQCR11/QCR10 and a cleavage product of UQCRFS1). This cytochrome bc1 complex then forms a dimer. Requires heme b as cofactor.

Its subcellular location is the mitochondrion inner membrane. Component of the ubiquinol-cytochrome c reductase complex (complex III or cytochrome b-c1 complex) that is part of the mitochondrial respiratory chain. The b-c1 complex mediates electron transfer from ubiquinol to cytochrome c. Contributes to the generation of a proton gradient across the mitochondrial membrane that is then used for ATP synthesis. This Herpetotheres cachinnans (Laughing falcon) protein is Cytochrome b (MT-CYB).